The primary structure comprises 252 residues: Phosphate import ATP-binding protein PstB (252 aa).

In terms of domain architecture, ABC transporter spans 6–247 (IDTRDVNFWY…PEKEATQNYI (242 aa)). 38-45 (GPSGCGKS) provides a ligand contact to ATP.

This sequence belongs to the ABC transporter superfamily. Phosphate importer (TC 3.A.1.7) family. As to quaternary structure, the complex is composed of two ATP-binding proteins (PstB), two transmembrane proteins (PstC and PstA) and a solute-binding protein (PstS).

It localises to the cell inner membrane. The catalysed reaction is phosphate(out) + ATP + H2O = ADP + 2 phosphate(in) + H(+). Functionally, part of the ABC transporter complex PstSACB involved in phosphate import. Responsible for energy coupling to the transport system. The polypeptide is Phosphate import ATP-binding protein PstB (Bacteroides thetaiotaomicron (strain ATCC 29148 / DSM 2079 / JCM 5827 / CCUG 10774 / NCTC 10582 / VPI-5482 / E50)).